Here is a 553-residue protein sequence, read N- to C-terminus: MITNKIKIFLISLIFISGVYALQVDAPQYQPNVIHPGDDVDLWIKITNDNYDNEVKNIVVEVSPHYPFELRQVNPIKGKATISHLNPGESDTVYFKLHVDENAPSRDYEIDVKVSYDEINKEDGKETIHHYEITKIYYLHVYGIASFEINGNFSLIPSKTQTVPIEIINTGTGTAKEVNLYIGYSLNSVNAGSESVEVSAYGTTKTQEKTIYYPTAVPISNLPISPVGETKFYLGALKPDNSRVINLKLYTASNLVEGCYQIPAVITWIDEDGTKRAEQITIGAYVKGDILLGISNVVTDPKEIKPGTTYVRIDVTITNNGHAEAKDVKLKLITNKPFKDSWSNCNIKDVGNLLPGVSKTVSFYVDVDKYASAKHYKLPIEISYLDTANNKYKTEKFIDIYVKPKPLFEIITKEVNVTAGKENTVYITIKNVGSEKAERVKISAIRNSGQPFDYPIKSDTIGTLYPNQTGTGVIVIDVDKNAESKPYIITIEIRCAGDSDEGDNNVYVYQEPLKVVVNNSNSKSYWILGIIVVIAIVLVVGYVFKRKNSKDKE.

A run of 2 helical transmembrane segments spans residues 6 to 26 (IKIF…QVDA) and 524 to 544 (SYWI…GYVF).

The protein to M.jannaschii MJ0795 and MJ1506.

It localises to the cell membrane. This is an uncharacterized protein from Methanocaldococcus jannaschii (strain ATCC 43067 / DSM 2661 / JAL-1 / JCM 10045 / NBRC 100440) (Methanococcus jannaschii).